Here is a 174-residue protein sequence, read N- to C-terminus: UPF0316 protein lmo1776 (174 aa).

A run of 3 helical transmembrane segments spans residues 4–24 (GIFIVVTIFIVNILYVTIYTV), 36–56 (LAALSSVFEMIIYVVALSLVL), and 62–82 (IANVLAYAVGFGVGIIVGMKI).

It belongs to the UPF0316 family.

The protein localises to the cell membrane. This is UPF0316 protein lmo1776 from Listeria monocytogenes serovar 1/2a (strain ATCC BAA-679 / EGD-e).